Consider the following 163-residue polypeptide: Ribosome maturation factor RimM (163 aa).

Positions 94-162 (ADEYYYIDLI…DHLVIAADFI (69 aa)) constitute a PRC barrel domain.

This sequence belongs to the RimM family. Binds ribosomal protein uS19.

The protein resides in the cytoplasm. Functionally, an accessory protein needed during the final step in the assembly of 30S ribosomal subunit, possibly for assembly of the head region. Essential for efficient processing of 16S rRNA. May be needed both before and after RbfA during the maturation of 16S rRNA. It has affinity for free ribosomal 30S subunits but not for 70S ribosomes. This chain is Ribosome maturation factor RimM, found in Zymomonas mobilis subsp. mobilis (strain ATCC 31821 / ZM4 / CP4).